A 515-amino-acid polypeptide reads, in one-letter code: MTKRALISVSDKSGIVDFAKELKNLGWDIISTGGTKVALDNAGVETIAIDDVTGFPEMMDGRVKTLHPNIHGGLLARRDADSHLQAAKDNNIELIDLVVVNLYPFKETILRPDITYDLAVENIDIGGPSMLRSAAKNHASVTVVVDPADYATVLGELADAGQTTFETRQRLAAKVFRHTAAYDALIAEYFTTQVGEAKPEKLTITYDLKQAMRYGENPQQDADFYQKALPTDYSIASAKQLNGKELSFNNIRDADAAIRIIRDFKDRPTVVVLKHMNPCGIGQADDIETAWDYAYEADPVSIFGGIVVLNREVDAATAKKMHPIFLEIIIAPSYSEEALAILTNKKKNLRILELPFDAQAASEVEAEYTGVVGGLLVQNQDVVAENPSDWQVVTDRQPTEQEATALEFAWKAIKYVKSNGIIITNDHMTLGLGAGQTNRVGSVKIAIEQAKDHLDGAVLASDAFFPFADNIEEIAAAGIKAIIQPGGSVRDQDSIDAANKHGLTMIFTGVRHFRH.

Positions 1 to 145 (MTKRALISVS…KNHASVTVVV (145 aa)) constitute an MGS-like domain.

The protein belongs to the PurH family.

The enzyme catalyses (6R)-10-formyltetrahydrofolate + 5-amino-1-(5-phospho-beta-D-ribosyl)imidazole-4-carboxamide = 5-formamido-1-(5-phospho-D-ribosyl)imidazole-4-carboxamide + (6S)-5,6,7,8-tetrahydrofolate. It catalyses the reaction IMP + H2O = 5-formamido-1-(5-phospho-D-ribosyl)imidazole-4-carboxamide. The protein operates within purine metabolism; IMP biosynthesis via de novo pathway; 5-formamido-1-(5-phospho-D-ribosyl)imidazole-4-carboxamide from 5-amino-1-(5-phospho-D-ribosyl)imidazole-4-carboxamide (10-formyl THF route): step 1/1. It participates in purine metabolism; IMP biosynthesis via de novo pathway; IMP from 5-formamido-1-(5-phospho-D-ribosyl)imidazole-4-carboxamide: step 1/1. This chain is Bifunctional purine biosynthesis protein PurH, found in Streptococcus pyogenes serotype M12 (strain MGAS2096).